The sequence spans 396 residues: DNA polymerase IV (396 aa).

The region spanning 6 to 186 (IIHVDMDAFY…LPISRLWGVG (181 aa)) is the UmuC domain. The Mg(2+) site is built by Asp-10 and Asp-104. Residue Glu-105 is part of the active site.

The protein belongs to the DNA polymerase type-Y family. Monomer. Mg(2+) serves as cofactor.

It is found in the cytoplasm. It catalyses the reaction DNA(n) + a 2'-deoxyribonucleoside 5'-triphosphate = DNA(n+1) + diphosphate. Its function is as follows. Poorly processive, error-prone DNA polymerase involved in untargeted mutagenesis. Copies undamaged DNA at stalled replication forks, which arise in vivo from mismatched or misaligned primer ends. These misaligned primers can be extended by PolIV. Exhibits no 3'-5' exonuclease (proofreading) activity. May be involved in translesional synthesis, in conjunction with the beta clamp from PolIII. The sequence is that of DNA polymerase IV from Desulfatibacillum aliphaticivorans.